The chain runs to 217 residues: Large ribosomal subunit protein uL3 (217 aa).

The segment covering 133 to 145 (GRASHGNSRSHNV) has biased composition (polar residues). Positions 133–153 (GRASHGNSRSHNVPGSIGMAQ) are disordered. An N5-methylglutamine modification is found at Q153.

The protein belongs to the universal ribosomal protein uL3 family. Part of the 50S ribosomal subunit. Forms a cluster with proteins L14 and L19. Post-translationally, methylated by PrmB.

In terms of biological role, one of the primary rRNA binding proteins, it binds directly near the 3'-end of the 23S rRNA, where it nucleates assembly of the 50S subunit. This chain is Large ribosomal subunit protein uL3, found in Ralstonia pickettii (strain 12J).